Consider the following 388-residue polypeptide: Carbamoyl phosphate synthase small chain (388 aa).

The interval 1-198 is CPSase; that stretch reads MSQDLLPGVT…WPEGYAKLDK (198 aa). Positions 53, 250, and 252 each coordinate L-glutamine. Residues 202-388 form the Glutamine amidotransferase type-1 domain; it reads EVVVIDYGVK…RFAGLMDAAK (187 aa). The active-site Nucleophile is cysteine 279. Residues leucine 280, glutamine 283, asparagine 321, glycine 323, and phenylalanine 324 each coordinate L-glutamine. Active-site residues include histidine 363 and glutamate 365.

It belongs to the CarA family. As to quaternary structure, composed of two chains; the small (or glutamine) chain promotes the hydrolysis of glutamine to ammonia, which is used by the large (or ammonia) chain to synthesize carbamoyl phosphate. Tetramer of heterodimers (alpha,beta)4.

It catalyses the reaction hydrogencarbonate + L-glutamine + 2 ATP + H2O = carbamoyl phosphate + L-glutamate + 2 ADP + phosphate + 2 H(+). The enzyme catalyses L-glutamine + H2O = L-glutamate + NH4(+). The protein operates within amino-acid biosynthesis; L-arginine biosynthesis; carbamoyl phosphate from bicarbonate: step 1/1. Its pathway is pyrimidine metabolism; UMP biosynthesis via de novo pathway; (S)-dihydroorotate from bicarbonate: step 1/3. Functionally, small subunit of the glutamine-dependent carbamoyl phosphate synthetase (CPSase). CPSase catalyzes the formation of carbamoyl phosphate from the ammonia moiety of glutamine, carbonate, and phosphate donated by ATP, constituting the first step of 2 biosynthetic pathways, one leading to arginine and/or urea and the other to pyrimidine nucleotides. The small subunit (glutamine amidotransferase) binds and cleaves glutamine to supply the large subunit with the substrate ammonia. The sequence is that of Carbamoyl phosphate synthase small chain from Caulobacter vibrioides (strain ATCC 19089 / CIP 103742 / CB 15) (Caulobacter crescentus).